Reading from the N-terminus, the 245-residue chain is Probable phosphatase Ent638_1550 (245 aa).

Positions 7, 9, 15, 40, 73, 101, 131, 192, and 194 each coordinate Zn(2+).

Belongs to the PHP family. In terms of assembly, homotrimer. Zn(2+) serves as cofactor.

This chain is Probable phosphatase Ent638_1550, found in Enterobacter sp. (strain 638).